Here is a 202-residue protein sequence, read N- to C-terminus: FMN-dependent NADH:quinone oxidoreductase (202 aa).

FMN contacts are provided by residues Ser-9 and 95–98 (MYNF).

The protein belongs to the azoreductase type 1 family. As to quaternary structure, homodimer. It depends on FMN as a cofactor.

It catalyses the reaction 2 a quinone + NADH + H(+) = 2 a 1,4-benzosemiquinone + NAD(+). The enzyme catalyses N,N-dimethyl-1,4-phenylenediamine + anthranilate + 2 NAD(+) = 2-(4-dimethylaminophenyl)diazenylbenzoate + 2 NADH + 2 H(+). Quinone reductase that provides resistance to thiol-specific stress caused by electrophilic quinones. Its function is as follows. Also exhibits azoreductase activity. Catalyzes the reductive cleavage of the azo bond in aromatic azo compounds to the corresponding amines. The chain is FMN-dependent NADH:quinone oxidoreductase from Chromobacterium violaceum (strain ATCC 12472 / DSM 30191 / JCM 1249 / CCUG 213 / NBRC 12614 / NCIMB 9131 / NCTC 9757 / MK).